The sequence spans 500 residues: Probable cytosol aminopeptidase (500 aa).

The Mn(2+) site is built by K274 and D279. K286 is an active-site residue. Mn(2+) contacts are provided by D297, D356, and E358. Residue R360 is part of the active site.

It belongs to the peptidase M17 family. The cofactor is Mn(2+).

It is found in the cytoplasm. The catalysed reaction is Release of an N-terminal amino acid, Xaa-|-Yaa-, in which Xaa is preferably Leu, but may be other amino acids including Pro although not Arg or Lys, and Yaa may be Pro. Amino acid amides and methyl esters are also readily hydrolyzed, but rates on arylamides are exceedingly low.. The enzyme catalyses Release of an N-terminal amino acid, preferentially leucine, but not glutamic or aspartic acids.. In terms of biological role, presumably involved in the processing and regular turnover of intracellular proteins. Catalyzes the removal of unsubstituted N-terminal amino acids from various peptides. This is Probable cytosol aminopeptidase from Saccharophagus degradans (strain 2-40 / ATCC 43961 / DSM 17024).